A 314-amino-acid polypeptide reads, in one-letter code: Methionyl-tRNA formyltransferase (314 aa).

110–113 (SLLP) is a binding site for (6S)-5,6,7,8-tetrahydrofolate.

The protein belongs to the Fmt family.

The catalysed reaction is L-methionyl-tRNA(fMet) + (6R)-10-formyltetrahydrofolate = N-formyl-L-methionyl-tRNA(fMet) + (6S)-5,6,7,8-tetrahydrofolate + H(+). In terms of biological role, attaches a formyl group to the free amino group of methionyl-tRNA(fMet). The formyl group appears to play a dual role in the initiator identity of N-formylmethionyl-tRNA by promoting its recognition by IF2 and preventing the misappropriation of this tRNA by the elongation apparatus. This Lactobacillus gasseri (strain ATCC 33323 / DSM 20243 / BCRC 14619 / CIP 102991 / JCM 1131 / KCTC 3163 / NCIMB 11718 / NCTC 13722 / AM63) protein is Methionyl-tRNA formyltransferase.